Here is an 87-residue protein sequence, read N- to C-terminus: Small ribosomal subunit protein uS19 (87 aa).

It belongs to the universal ribosomal protein uS19 family.

Protein S19 forms a complex with S13 that binds strongly to the 16S ribosomal RNA. In Mycoplasma pneumoniae (strain ATCC 29342 / M129 / Subtype 1) (Mycoplasmoides pneumoniae), this protein is Small ribosomal subunit protein uS19 (rpsS).